Reading from the N-terminus, the 727-residue chain is Non-structural protein 4 (727 aa).

Disordered regions lie at residues 1–38 (MNQS…PSEG) and 673–727 (SMTL…KLSK). Polar residues predominate over residues 17-38 (RTPSALSSNSETPGSMSSPSEG). A compositionally biased stretch (basic residues) spans 712–727 (SRRKARKARAASKLSK).

The polypeptide is Non-structural protein 4 (Rice dwarf virus (isolate Akita) (RDV)).